Here is a 346-residue protein sequence, read N- to C-terminus: Phosphoribosylformylglycinamidine cyclo-ligase (346 aa).

This sequence belongs to the AIR synthase family.

It localises to the cytoplasm. It carries out the reaction 2-formamido-N(1)-(5-O-phospho-beta-D-ribosyl)acetamidine + ATP = 5-amino-1-(5-phospho-beta-D-ribosyl)imidazole + ADP + phosphate + H(+). The protein operates within purine metabolism; IMP biosynthesis via de novo pathway; 5-amino-1-(5-phospho-D-ribosyl)imidazole from N(2)-formyl-N(1)-(5-phospho-D-ribosyl)glycinamide: step 2/2. This Bacillus velezensis (strain DSM 23117 / BGSC 10A6 / LMG 26770 / FZB42) (Bacillus amyloliquefaciens subsp. plantarum) protein is Phosphoribosylformylglycinamidine cyclo-ligase.